A 243-amino-acid chain; its full sequence is ADP-ribosylation factor-like protein 10 (243 aa).

GTP contacts are provided by residues 83-90 (GLDGSGKS), 127-131 (EIGGS), and 184-187 (NKQD).

The protein belongs to the small GTPase superfamily. Arf family.

This is ADP-ribosylation factor-like protein 10 (Arl10) from Mus musculus (Mouse).